Here is a 444-residue protein sequence, read N- to C-terminus: Pre-mRNA-splicing factor cwc25 (444 aa).

3 disordered regions span residues 1–27 (MGSGDLNMKKSWHPQRSGNVAATQKAE), 168–385 (LASM…TDLD), and 397–425 (EAERAEREADEKARQQNKKFRGGDAGFMS). The stretch at 19–65 (NVAATQKAEAEAIAERKKLQQRLQEIEEERRKEEIQKALEAAGGKRK) forms a coiled coil. The segment covering 186–199 (QRRHKHRSHHHRSD) has biased composition (basic residues). Basic and acidic residues-rich tracts occupy residues 200–220 (RHRDRDDDRDRDSARDRDRDR) and 228–281 (DSRD…DDRS). Basic residues predominate over residues 282–293 (RRHRFPQGRSRS). Composition is skewed to basic and acidic residues over residues 305-344 (RREYSRERDSGGPSSRRDDRNSRDQNRPRRDYAKEDEQPK), 360-372 (DGDHKNAEEERAK), and 397-410 (EAERAEREADEKAR). Residues 364–417 (KNAEEERAKKLAAMQAAATDLDKAREERLKALAEAERAEREADEKARQQNKKFR) adopt a coiled-coil conformation.

Belongs to the CWC25 family. As to quaternary structure, associated with the spliceosome.

It is found in the nucleus. Functionally, involved in pre-mRNA splicing. The chain is Pre-mRNA-splicing factor cwc25 (msp-6) from Neurospora crassa (strain ATCC 24698 / 74-OR23-1A / CBS 708.71 / DSM 1257 / FGSC 987).